The sequence spans 979 residues: Putative cellulose synthase-like protein D6 (979 aa).

A disordered region spans residues 1 to 24 (MMDGESPLRHPRISHVSNSGSDFG). Over residues 14 to 24 (SHVSNSGSDFG) the composition is skewed to low complexity. 2 helical membrane passes run 116–136 (IIIALYRILIVVRVVSLALFL) and 147–167 (ALWLWLLSVICELWFAFSWLL). Active-site residues include D247 and D683. Transmembrane regions (helical) follow at residues 765-785 (IFILTYCFLPPLSLFSGHFVV), 788-808 (LTGSFLIYLLIITLSLCGLAV), 837-857 (LVAVLQGILKVIAGVEISFTL), 882-902 (ALMIPPLTIIILNIVAILFAV), 913-933 (WSNLLGGTFFASWVLLHMYPF), and 946-966 (TVVYVWSGLIAICLSLLYITI).

This sequence belongs to the glycosyltransferase 2 family. Plant cellulose synthase-like D subfamily.

The protein localises to the golgi apparatus membrane. Its function is as follows. Thought to be a Golgi-localized beta-glycan synthase that polymerize the backbones of noncellulosic polysaccharides (hemicelluloses) of plant cell wall. The sequence is that of Putative cellulose synthase-like protein D6 (CSLD6) from Arabidopsis thaliana (Mouse-ear cress).